The chain runs to 123 residues: Immunoglobulin lambda variable 5-37 (123 aa).

Residues 1 to 19 (MAWTPLLLLLLSHCTGSLS) form the signal peptide. A framework-1 region spans residues 20–44 (QPVLTQPPSSSASPGESARLTCTLP). The Ig-like domain occupies 21–123 (PVLTQPPSSS…YCMIWPSNAS (103 aa)). An intrachain disulfide couples Cys-41 to Cys-115. The tract at residues 45 to 53 (SDINVGSYN) is complementarity-determining-1. Positions 54–70 (IYWYQQKPGSPPRYLLY) are framework-2. The interval 71 to 77 (YYSDSDK) is complementarity-determining-2. Residues 78–115 (GQGSGVPSRFSGSKDASANTGILLISGLQSEDEADYYC) are framework-3. Residues 116-123 (MIWPSNAS) are complementarity-determining-3.

Immunoglobulins are composed of two identical heavy chains and two identical light chains; disulfide-linked.

The protein resides in the secreted. Its subcellular location is the cell membrane. In terms of biological role, v region of the variable domain of immunoglobulin light chains that participates in the antigen recognition. Immunoglobulins, also known as antibodies, are membrane-bound or secreted glycoproteins produced by B lymphocytes. In the recognition phase of humoral immunity, the membrane-bound immunoglobulins serve as receptors which, upon binding of a specific antigen, trigger the clonal expansion and differentiation of B lymphocytes into immunoglobulins-secreting plasma cells. Secreted immunoglobulins mediate the effector phase of humoral immunity, which results in the elimination of bound antigens. The antigen binding site is formed by the variable domain of one heavy chain, together with that of its associated light chain. Thus, each immunoglobulin has two antigen binding sites with remarkable affinity for a particular antigen. The variable domains are assembled by a process called V-(D)-J rearrangement and can then be subjected to somatic hypermutations which, after exposure to antigen and selection, allow affinity maturation for a particular antigen. In Homo sapiens (Human), this protein is Immunoglobulin lambda variable 5-37.